A 617-amino-acid polypeptide reads, in one-letter code: E3 ubiquitin-protein ligase ORTHRUS 1 (617 aa).

The PHD-type zinc finger occupies Asp12 to Val62. The RING-type 1 zinc finger occupies Cys129–Arg169. Residues Thr258 to Arg407 form the YDG domain. The segment at Cys495 to Thr552 adopts an RING-type 2 zinc-finger fold. A coiled-coil region spans residues Gln563 to Glu593. Positions Phe575 to Ala617 are disordered. The span at Glu580–Glu595 shows a compositional bias: acidic residues. Positions Asp604–Ala617 are enriched in polar residues.

In terms of tissue distribution, expressed in inflorescences and leaves.

The protein resides in the nucleus. It carries out the reaction S-ubiquitinyl-[E2 ubiquitin-conjugating enzyme]-L-cysteine + [acceptor protein]-L-lysine = [E2 ubiquitin-conjugating enzyme]-L-cysteine + N(6)-ubiquitinyl-[acceptor protein]-L-lysine.. Its pathway is protein modification; protein ubiquitination. Functionally, E3 ubiquitin-protein ligase. Participates in CpG methylation-dependent transcriptional regulation and epigenetic transcriptional silencing. Mediates ubiquitination with the E2 ubiquitin-conjugating enzymes UBC11, UBC8 and UBC8 homologs (e.g. UBC10, UBC11, UBC28 and UBC29) but not with UBC27, UBC30, UBC32, UBC34 and UBC36. Promotes methylation-mediated gene silencing leading, for example, to early flowering. Can bind to CpG, CpNpG, and CpNpN DNA motifs, with a strong preference for methylated forms, and with highest affinity for CpG substrate. The protein is E3 ubiquitin-protein ligase ORTHRUS 1 (ORTH1) of Arabidopsis thaliana (Mouse-ear cress).